The primary structure comprises 507 residues: Steroid 17-alpha-hydroxylase/17,20 lyase (507 aa).

Cysteine 441 lines the heme pocket.

It belongs to the cytochrome P450 family. It depends on heme as a cofactor.

It localises to the endoplasmic reticulum membrane. The protein resides in the microsome membrane. It carries out the reaction a C21-steroid + reduced [NADPH--hemoprotein reductase] + O2 = a 17alpha-hydroxy-C21-steroid + oxidized [NADPH--hemoprotein reductase] + H2O + H(+). The catalysed reaction is progesterone + reduced [NADPH--hemoprotein reductase] + O2 = 17alpha-hydroxyprogesterone + oxidized [NADPH--hemoprotein reductase] + H2O + H(+). It catalyses the reaction pregnenolone + reduced [NADPH--hemoprotein reductase] + O2 = 17alpha-hydroxypregnenolone + oxidized [NADPH--hemoprotein reductase] + H2O + H(+). The enzyme catalyses 17alpha-hydroxyprogesterone + reduced [NADPH--hemoprotein reductase] + O2 = androst-4-ene-3,17-dione + acetate + oxidized [NADPH--hemoprotein reductase] + H2O + 2 H(+). It carries out the reaction 17alpha-hydroxyprogesterone + reduced [NADPH--hemoprotein reductase] + O2 = 16alpha,17alpha-dihydroxyprogesterone + oxidized [NADPH--hemoprotein reductase] + H2O + H(+). The catalysed reaction is 16alpha,17alpha-dihydroxyprogesterone + reduced [NADPH--hemoprotein reductase] + O2 = 6beta,16alpha,17alpha-trihydroxyprogesterone + oxidized [NADPH--hemoprotein reductase] + H2O + H(+). It catalyses the reaction 17alpha-hydroxypregnenolone + reduced [NADPH--hemoprotein reductase] + O2 = 3beta-hydroxyandrost-5-en-17-one + acetate + oxidized [NADPH--hemoprotein reductase] + H2O + 2 H(+). The enzyme catalyses 16alpha,17alpha-dihydroxypregnenolone + reduced [NADPH--hemoprotein reductase] + O2 = 3beta,16alpha-dihydroxy-androst-5-en-17-one + acetate + oxidized [NADPH--hemoprotein reductase] + H2O + 2 H(+). It carries out the reaction 3beta-hydroxyandrost-5-en-17-one + reduced [NADPH--hemoprotein reductase] + O2 = 3beta,16alpha-dihydroxy-androst-5-en-17-one + oxidized [NADPH--hemoprotein reductase] + H2O + H(+). The catalysed reaction is androst-4-ene-3,17-dione + reduced [NADPH--hemoprotein reductase] + O2 = 16alpha-hydroxyandrost-4-ene-3,17-dione + oxidized [NADPH--hemoprotein reductase] + H2O + H(+). Its pathway is steroid hormone biosynthesis. The protein operates within steroid biosynthesis; glucocorticoid biosynthesis. Regulated predominantly by intracellular cAMP levels. The 17,20-lyase activity is stimulated by cytochrome b5, which acts as an allosteric effector increasing the Vmax of the lyase activity. Functionally, a cytochrome P450 monooxygenase involved in corticoid and androgen biosynthesis. Catalyzes 17-alpha hydroxylation of C21 steroids, which is common for both pathways. A second oxidative step, required only for androgen synthesis, involves an acyl-carbon cleavage. The 17-alpha hydroxy intermediates, as part of adrenal glucocorticoids biosynthesis pathway, are precursors of cortisol. Hydroxylates steroid hormones, pregnenolone and progesterone to form 17-alpha hydroxy metabolites, followed by the cleavage of the C17-C20 bond to form C19 steroids, dehydroepiandrosterone (DHEA) and androstenedione. Has 16-alpha hydroxylase activity. Catalyzes 16-alpha hydroxylation of 17-alpha hydroxy pregnenolone, followed by the cleavage of the C17-C20 bond to form 16-alpha-hydroxy DHEA. Also 16-alpha hydroxylates androgens, relevant for estriol synthesis. Mechanistically, uses molecular oxygen inserting one oxygen atom into a substrate, and reducing the second into a water molecule, with two electrons provided by NADPH via cytochrome P450 reductase (CPR; NADPH-ferrihemoprotein reductase). This Rattus norvegicus (Rat) protein is Steroid 17-alpha-hydroxylase/17,20 lyase (Cyp17a1).